The sequence spans 183 residues: Acireductone dioxygenase (183 aa).

Positions 99, 101, 105, and 144 each coordinate Fe(2+). Residues His-99, His-101, Glu-105, and His-144 each coordinate Ni(2+).

Belongs to the acireductone dioxygenase (ARD) family. Monomer. It depends on Fe(2+) as a cofactor. Ni(2+) is required as a cofactor.

The enzyme catalyses 1,2-dihydroxy-5-(methylsulfanyl)pent-1-en-3-one + O2 = 3-(methylsulfanyl)propanoate + CO + formate + 2 H(+). It carries out the reaction 1,2-dihydroxy-5-(methylsulfanyl)pent-1-en-3-one + O2 = 4-methylsulfanyl-2-oxobutanoate + formate + 2 H(+). It functions in the pathway amino-acid biosynthesis; L-methionine biosynthesis via salvage pathway; L-methionine from S-methyl-5-thio-alpha-D-ribose 1-phosphate: step 5/6. Functionally, catalyzes 2 different reactions between oxygen and the acireductone 1,2-dihydroxy-3-keto-5-methylthiopentene (DHK-MTPene) depending upon the metal bound in the active site. Fe-containing acireductone dioxygenase (Fe-ARD) produces formate and 2-keto-4-methylthiobutyrate (KMTB), the alpha-ketoacid precursor of methionine in the methionine recycle pathway. Ni-containing acireductone dioxygenase (Ni-ARD) produces methylthiopropionate, carbon monoxide and formate, and does not lie on the methionine recycle pathway. The chain is Acireductone dioxygenase from Microcystis aeruginosa (strain NIES-843 / IAM M-2473).